Consider the following 597-residue polypeptide: Uptake hydrogenase large subunit (597 aa).

Ni(2+)-binding residues include cysteine 75, cysteine 78, cysteine 576, and cysteine 579.

It belongs to the [NiFe]/[NiFeSe] hydrogenase large subunit family. As to quaternary structure, heterodimer of a large and a small subunit. It depends on Ni(2+) as a cofactor.

Its subcellular location is the cell membrane. It carries out the reaction H2 + A = AH2. This enzyme recycles the H(2) produced by nitrogenase to increase the production of ATP and to protect nitrogenase against inhibition or damage by O(2) under carbon- or phosphate-limited conditions. The sequence is that of Uptake hydrogenase large subunit (hupB) from Rhodobacter capsulatus (Rhodopseudomonas capsulata).